The primary structure comprises 88 residues: Putative regulatory protein DvMF_1139 (88 aa).

It belongs to the RemA family.

The sequence is that of Putative regulatory protein DvMF_1139 from Nitratidesulfovibrio vulgaris (strain DSM 19637 / Miyazaki F) (Desulfovibrio vulgaris).